We begin with the raw amino-acid sequence, 406 residues long: Zinc finger protein 793 (406 aa).

The 72-residue stretch at 8-79 folds into the KRAB domain; the sequence is VSFKDVVVGF…EAACPGCHCW (72 aa). C2H2-type zinc fingers lie at residues 227–249, 255–277, 283–305, 311–333, 339–361, and 367–389; these read HVCS…QRSH, YGCT…QRIH, FECF…QRTH, FVCS…RKMH, YRCR…WRTH, and YGCN…QKIH.

It belongs to the krueppel C2H2-type zinc-finger protein family.

The protein resides in the nucleus. May be involved in transcriptional regulation. The sequence is that of Zinc finger protein 793 (ZNF793) from Homo sapiens (Human).